The following is a 128-amino-acid chain: Small ribosomal subunit protein eS8 (128 aa).

The tract at residues 1-31 (MAWYQGNDLRKPTGGKKTRHRKKRKHELGRP) is disordered. Residues 13–27 (TGGKKTRHRKKRKHE) show a composition bias toward basic residues.

Belongs to the eukaryotic ribosomal protein eS8 family. In terms of assembly, part of the 30S ribosomal subunit.

This chain is Small ribosomal subunit protein eS8, found in Staphylothermus marinus (strain ATCC 43588 / DSM 3639 / JCM 9404 / F1).